Consider the following 476-residue polypeptide: Glycogen synthase (476 aa).

Lys-15 is an ADP-alpha-D-glucose binding site.

It belongs to the glycosyltransferase 1 family. Bacterial/plant glycogen synthase subfamily.

The enzyme catalyses [(1-&gt;4)-alpha-D-glucosyl](n) + ADP-alpha-D-glucose = [(1-&gt;4)-alpha-D-glucosyl](n+1) + ADP + H(+). Its pathway is glycan biosynthesis; glycogen biosynthesis. Functionally, synthesizes alpha-1,4-glucan chains using ADP-glucose. The protein is Glycogen synthase of Leptospira biflexa serovar Patoc (strain Patoc 1 / Ames).